Reading from the N-terminus, the 96-residue chain is Aspartyl/glutamyl-tRNA(Asn/Gln) amidotransferase subunit C (96 aa).

The protein belongs to the GatC family. Heterotrimer of A, B and C subunits.

The enzyme catalyses L-glutamyl-tRNA(Gln) + L-glutamine + ATP + H2O = L-glutaminyl-tRNA(Gln) + L-glutamate + ADP + phosphate + H(+). The catalysed reaction is L-aspartyl-tRNA(Asn) + L-glutamine + ATP + H2O = L-asparaginyl-tRNA(Asn) + L-glutamate + ADP + phosphate + 2 H(+). In terms of biological role, allows the formation of correctly charged Asn-tRNA(Asn) or Gln-tRNA(Gln) through the transamidation of misacylated Asp-tRNA(Asn) or Glu-tRNA(Gln) in organisms which lack either or both of asparaginyl-tRNA or glutaminyl-tRNA synthetases. The reaction takes place in the presence of glutamine and ATP through an activated phospho-Asp-tRNA(Asn) or phospho-Glu-tRNA(Gln). The protein is Aspartyl/glutamyl-tRNA(Asn/Gln) amidotransferase subunit C of Oceanobacillus iheyensis (strain DSM 14371 / CIP 107618 / JCM 11309 / KCTC 3954 / HTE831).